The sequence spans 169 residues: MAPKKAKRRAGAEGSSNVFSMFDQTQIQEFKEAFTVIDQNRDGIIDKEDLRDTFAAMGRLNVKNEELDAMMKEASGPINFTVFLTMFGEKLKGADPEDVITGAFKVLDPEGKGTIKKQFLEELLTTQCDRFSQEEIKNMWAAFPPDVGGNVDYKNICYVITHGDAKDQE.

N,N,N-trimethylalanine is present on Ala2. Ser15 and Ser16 each carry phosphoserine. Thr25 and Thr35 each carry phosphothreonine. The 36-residue stretch at 25–60 (TQIQEFKEAFTVIDQNRDGIIDKEDLRDTFAAMGRL) folds into the EF-hand 1 domain. The Ca(2+) site is built by Asp38, Asn40, Asp42, and Asp49. Residue Ser75 is modified to Phosphoserine. 2 consecutive EF-hand domains span residues 95–130 (DPED…QCDR) and 131–166 (FSQE…GDAK). At Thr101 the chain carries Phosphothreonine.

As to quaternary structure, myosin is a hexamer of 2 heavy chains and 4 light chains.

Functionally, myosin regulatory subunit that plays an essential role to maintain muscle integrity during early development. Plays a role in regulation of muscle contraction. The sequence is that of Myosin regulatory light chain 11 (Myl11) from Mus musculus (Mouse).